The sequence spans 258 residues: MHDWDPALYQRFESERTRPAVELLARVSHPAPRHIVDLGCGNGNSTQLLLERFPQSQLIGLDNSEAMLASARKRLPGVPFVQADIADWAPTVAPDLIFANASLQWVAGHAGLFARLMRCLAPGGVLAVQMPDNLDQPSHQLMRELASQSAWRDQLAHAADQRAALLSVEAYYDLLAPMACRVDIWHTAYRHVMPSVQAIVEWLESTGLKPFLDPLSAVLRDAYLQAYTQRIGEAYTKRADGHRLFAFPRLFIVAQRAP.

The protein belongs to the methyltransferase superfamily. Tam family.

It localises to the cytoplasm. It catalyses the reaction trans-aconitate + S-adenosyl-L-methionine = (E)-3-(methoxycarbonyl)pent-2-enedioate + S-adenosyl-L-homocysteine. Its function is as follows. Catalyzes the S-adenosylmethionine monomethyl esterification of trans-aconitate. The chain is Trans-aconitate 2-methyltransferase from Acidovorax ebreus (strain TPSY) (Diaphorobacter sp. (strain TPSY)).